The chain runs to 193 residues: Potassium-transporting ATPase KdpC subunit (193 aa).

A helical transmembrane segment spans residues 14–34; it reads ITFTFLVLCGLVYPLIVTGIA.

Belongs to the KdpC family. In terms of assembly, the system is composed of three essential subunits: KdpA, KdpB and KdpC.

The protein resides in the cell membrane. In terms of biological role, part of the high-affinity ATP-driven potassium transport (or Kdp) system, which catalyzes the hydrolysis of ATP coupled with the electrogenic transport of potassium into the cytoplasm. This subunit acts as a catalytic chaperone that increases the ATP-binding affinity of the ATP-hydrolyzing subunit KdpB by the formation of a transient KdpB/KdpC/ATP ternary complex. This chain is Potassium-transporting ATPase KdpC subunit, found in Bacillus mycoides (strain KBAB4) (Bacillus weihenstephanensis).